The following is a 360-amino-acid chain: Histidinol-phosphate aminotransferase (360 aa).

Lys219 is modified (N6-(pyridoxal phosphate)lysine).

It belongs to the class-II pyridoxal-phosphate-dependent aminotransferase family. Histidinol-phosphate aminotransferase subfamily. As to quaternary structure, homodimer. Pyridoxal 5'-phosphate serves as cofactor.

It carries out the reaction L-histidinol phosphate + 2-oxoglutarate = 3-(imidazol-4-yl)-2-oxopropyl phosphate + L-glutamate. It functions in the pathway amino-acid biosynthesis; L-histidine biosynthesis; L-histidine from 5-phospho-alpha-D-ribose 1-diphosphate: step 7/9. This chain is Histidinol-phosphate aminotransferase, found in Jannaschia sp. (strain CCS1).